A 473-amino-acid polypeptide reads, in one-letter code: Photosystem II CP43 reaction center protein (473 aa).

The propeptide occupies 1–14 (MKILYSLRRFYHVE). T15 is subject to N-acetylthreonine. A Phosphothreonine modification is found at T15. Helical transmembrane passes span 69–93 (LFEVAHFVPEKPMYEQGLILLPHLA), 134–155 (LLGPETLEESFPFFGYVWKDRN), 178–200 (KALYFGGVYDTWAPGGGDVRKIT), 255–275 (KPFAWARRAFVWSGEAYLSYS), and 291–312 (WFNNTAYPSEFYGPTGPEASQA). Residue E367 participates in [CaMn4O5] cluster binding. A helical transmembrane segment spans residues 447 to 471 (RARAAAAGFEKGIDRDLEPVLFMTP).

Belongs to the PsbB/PsbC family. PsbC subfamily. As to quaternary structure, PSII is composed of 1 copy each of membrane proteins PsbA, PsbB, PsbC, PsbD, PsbE, PsbF, PsbH, PsbI, PsbJ, PsbK, PsbL, PsbM, PsbT, PsbX, PsbY, PsbZ, Psb30/Ycf12, at least 3 peripheral proteins of the oxygen-evolving complex and a large number of cofactors. It forms dimeric complexes. Requires Binds multiple chlorophylls and provides some of the ligands for the Ca-4Mn-5O cluster of the oxygen-evolving complex. It may also provide a ligand for a Cl- that is required for oxygen evolution. PSII binds additional chlorophylls, carotenoids and specific lipids. as cofactor.

It localises to the plastid. The protein resides in the chloroplast thylakoid membrane. One of the components of the core complex of photosystem II (PSII). It binds chlorophyll and helps catalyze the primary light-induced photochemical processes of PSII. PSII is a light-driven water:plastoquinone oxidoreductase, using light energy to abstract electrons from H(2)O, generating O(2) and a proton gradient subsequently used for ATP formation. The protein is Photosystem II CP43 reaction center protein of Lemna minor (Common duckweed).